Consider the following 365-residue polypeptide: Histidinol-phosphate aminotransferase (365 aa).

Positions 1–23 (MSRPVPNPGILDIAPYTPGKSPV) are disordered. At lysine 221 the chain carries N6-(pyridoxal phosphate)lysine.

This sequence belongs to the class-II pyridoxal-phosphate-dependent aminotransferase family. Histidinol-phosphate aminotransferase subfamily. As to quaternary structure, homodimer. Pyridoxal 5'-phosphate is required as a cofactor.

It catalyses the reaction L-histidinol phosphate + 2-oxoglutarate = 3-(imidazol-4-yl)-2-oxopropyl phosphate + L-glutamate. It participates in amino-acid biosynthesis; L-histidine biosynthesis; L-histidine from 5-phospho-alpha-D-ribose 1-diphosphate: step 7/9. The chain is Histidinol-phosphate aminotransferase from Rhodopseudomonas palustris (strain BisB18).